The chain runs to 447 residues: Tubulin alpha-1 chain (447 aa).

Residues glutamine 11, glutamate 72, serine 141, glycine 145, threonine 146, threonine 180, asparagine 207, and asparagine 229 each coordinate GTP. Glutamate 72 contributes to the Mg(2+) binding site. The active site involves glutamate 255.

It belongs to the tubulin family. In terms of assembly, dimer of alpha and beta chains. A typical microtubule is a hollow water-filled tube with an outer diameter of 25 nm and an inner diameter of 15 nM. Alpha-beta heterodimers associate head-to-tail to form protofilaments running lengthwise along the microtubule wall with the beta-tubulin subunit facing the microtubule plus end conferring a structural polarity. Microtubules usually have 13 protofilaments but different protofilament numbers can be found in some organisms and specialized cells. It depends on Mg(2+) as a cofactor.

The protein resides in the cytoplasm. The protein localises to the cytoskeleton. It carries out the reaction GTP + H2O = GDP + phosphate + H(+). Its function is as follows. Tubulin is the major constituent of microtubules, a cylinder consisting of laterally associated linear protofilaments composed of alpha- and beta-tubulin heterodimers. Microtubules grow by the addition of GTP-tubulin dimers to the microtubule end, where a stabilizing cap forms. Below the cap, tubulin dimers are in GDP-bound state, owing to GTPase activity of alpha-tubulin. The sequence is that of Tubulin alpha-1 chain (TUB1) from Saccharomyces cerevisiae (strain ATCC 204508 / S288c) (Baker's yeast).